The primary structure comprises 400 residues: Phosphoglycerate kinase (400 aa).

Residues 19-21, arginine 38, 61-64, arginine 124, and arginine 161 each bind substrate; these read DLN and HLGR. ATP is bound by residues lysine 211, glycine 299, glutamate 330, and 356-359; that span reads GGDS.

Belongs to the phosphoglycerate kinase family. Monomer.

The protein resides in the cytoplasm. It catalyses the reaction (2R)-3-phosphoglycerate + ATP = (2R)-3-phospho-glyceroyl phosphate + ADP. It participates in carbohydrate degradation; glycolysis; pyruvate from D-glyceraldehyde 3-phosphate: step 2/5. The polypeptide is Phosphoglycerate kinase (Parafrankia sp. (strain EAN1pec)).